The primary structure comprises 404 residues: Rhomboid-related protein 3 (404 aa).

2 EF-hand domains span residues 34 to 69 and 70 to 105; these read APEDHWKVLFEKFDPGSTGYISTGKFRSLLESHSSK and LDPHKKEVLLALADSHADGQICYQDFVNLMSNKRSN. 7 helical membrane-spanning segments follow: residues 164-184, 227-247, 250-270, 274-294, 305-324, 338-358, and 371-391; these read WFMITITLLEVALFLYNGVLL, LGLNVALQLLVGVPLEMVHGA, IGLVYVAGVVAGSLAVSVADM, VVGSSGGVYALVSAHLANIVM, LLRMAVALICMSMEFGRAVW, PSFVAHLGGVAVGITLGVVVL, and WWIFVTMYTIFVLFAVFWNIF. Serine 278 functions as the Nucleophile in the catalytic mechanism. Residue histidine 343 is part of the active site.

This sequence belongs to the peptidase S54 family.

It localises to the membrane. The enzyme catalyses Cleaves type-1 transmembrane domains using a catalytic dyad composed of serine and histidine that are contributed by different transmembrane domains.. In terms of biological role, may be involved in regulated intramembrane proteolysis and the subsequent release of functional polypeptides from their membrane anchors. The sequence is that of Rhomboid-related protein 3 (Rhbdl3) from Mus musculus (Mouse).